We begin with the raw amino-acid sequence, 275 residues long: MRSPLSDKSGSPEQSTRLEVEIETRDLSVYYGSHLAVKQVSLKIPKNHITAFIGPSGCGKSTILRCFNRMNDLIPGARVEGSVIFHGKNIYDPDVDPSEVRRRVGLVFQKPNPFPKSIYDNIAFGPRINGYQGDLDELVERALRQAVLWDEVKDKLRMSALSLSGGQQQRLCIARTLAIQPEVILMDEPCASLDPISTLRIEELLKELGRRYTIIIVTHNMQQAARVSDFTAFFNTELDERGIRYGRMVEFDRTEKIFNSPANRETEEYVSGRFG.

Residues 22 to 261 enclose the ABC transporter domain; the sequence is IETRDLSVYY…DRTEKIFNSP (240 aa). 54–61 lines the ATP pocket; that stretch reads GPSGCGKS.

It belongs to the ABC transporter superfamily. Phosphate importer (TC 3.A.1.7) family. In terms of assembly, the complex is composed of two ATP-binding proteins (PstB), two transmembrane proteins (PstC and PstA) and a solute-binding protein (PstS).

The protein localises to the cell inner membrane. It carries out the reaction phosphate(out) + ATP + H2O = ADP + 2 phosphate(in) + H(+). Its function is as follows. Part of the ABC transporter complex PstSACB involved in phosphate import. Responsible for energy coupling to the transport system. The protein is Phosphate import ATP-binding protein PstB 1 of Synechococcus sp. (strain JA-3-3Ab) (Cyanobacteria bacterium Yellowstone A-Prime).